The following is a 700-amino-acid chain: Pentatricopeptide repeat-containing protein 1, mitochondrial (700 aa).

The segment at 49–93 (SSSQLPLGQERQENTGSLGSDPSHSNSTATQEEDEEEEESFGTLS) is disordered. Residues 62–78 (NTGSLGSDPSHSNSTAT) are compositionally biased toward polar residues. Acidic residues predominate over residues 79–88 (QEEDEEEEES). PPR repeat units follow at residues 135–171 (TPYW…RLQP), 172–206 (MESN…DLEP), 207–245 (SDAT…NFEL), 246–280 (NLKT…GHVV), 281–317 (TEET…GLQP), and 318–354 (SRDS…ATVL). Residues 393–414 (SQALGPPEPPEARVPGKAQPEV) form a disordered region. PPR repeat units follow at residues 519–553 (DLTF…GLVP), 554–585 (NLQT…QVTP), and 586–620 (NTHI…RVPV). The segment at 672–700 (HPWQKFRTKPQGDQDTGKEADDGCALGGR) is disordered. Over residues 681–692 (PQGDQDTGKEAD) the composition is skewed to basic and acidic residues.

The protein belongs to the PTCD1 family. In terms of assembly, associates with mitochondrial leucine tRNAs. Interacts with ELAC2. In terms of tissue distribution, abundant in testes, skeletal muscle and heart.

The protein resides in the mitochondrion. The protein localises to the mitochondrion matrix. Mitochondrial protein implicated in negative regulation of leucine tRNA levels, as well as negative regulation of mitochondria-encoded proteins and COX activity. Also affects the 3'-processing of mitochondrial tRNAs. The chain is Pentatricopeptide repeat-containing protein 1, mitochondrial (PTCD1) from Homo sapiens (Human).